The chain runs to 315 residues: Methionyl-tRNA formyltransferase (315 aa).

(6S)-5,6,7,8-tetrahydrofolate is bound at residue 113–116; the sequence is SLLP.

Belongs to the Fmt family.

The catalysed reaction is L-methionyl-tRNA(fMet) + (6R)-10-formyltetrahydrofolate = N-formyl-L-methionyl-tRNA(fMet) + (6S)-5,6,7,8-tetrahydrofolate + H(+). In terms of biological role, attaches a formyl group to the free amino group of methionyl-tRNA(fMet). The formyl group appears to play a dual role in the initiator identity of N-formylmethionyl-tRNA by promoting its recognition by IF2 and preventing the misappropriation of this tRNA by the elongation apparatus. This is Methionyl-tRNA formyltransferase from Escherichia coli O127:H6 (strain E2348/69 / EPEC).